A 122-amino-acid chain; its full sequence is uncharacterized protein (122 aa).

This is an uncharacterized protein from Methanothermobacter thermautotrophicus (Methanobacterium thermoformicicum).